Consider the following 343-residue polypeptide: uncharacterized protein (343 aa).

11 consecutive transmembrane segments (helical) span residues 13–33, 44–64, 71–91, 121–141, 148–168, 177–197, 203–223, 244–264, 269–289, 296–316, and 320–340; these read VILY…SMCG, LWGY…ATLD, MHPV…LFFI, ILLL…LTGL, NASL…YLIF, FLGI…GDFS, VAVT…LDTV, VGGF…ELPL, YALG…YIAI, MVGA…FIIL, and FSIM…ILYW. EamA domains follow at residues 55–192 and 216–340; these read IFFG…YLLT and FFWS…ILYW.

It belongs to the EamA transporter family.

Its subcellular location is the cell membrane. This is an uncharacterized protein from Methanothermobacter thermautotrophicus (strain ATCC 29096 / DSM 1053 / JCM 10044 / NBRC 100330 / Delta H) (Methanobacterium thermoautotrophicum).